The primary structure comprises 264 residues: Inner membrane ABC transporter permease protein YdcV (264 aa).

Topologically, residues 1–12 (MHSERAPFFLKL) are cytoplasmic. A helical membrane pass occupies residues 13–33 (AAWGGVVFLHFPILIIAAYAF). Residues 34–70 (NTEDAAFSFPPQGLTLRWFSVAAQRSDILDAVTLSLK) are Periplasmic-facing. Residues 65 to 252 (VTLSLKVAAL…MLVTTLPILG (188 aa)) enclose the ABC transmembrane type-1 domain. Residues 71–91 (VAALATLIALVLGTLAAAALW) traverse the membrane as a helical segment. Residues 92–100 (RRDFFGKNA) lie on the Cytoplasmic side of the membrane. The helical transmembrane segment at 101 to 121 (ISLLLLLPIALPGIVTGLALL) threads the bilayer. At 122-128 (TAFKTIN) the chain is on the periplasmic side. The chain crosses the membrane as a helical span at residues 129 to 149 (LEPGFFTIVVGHATFCVVVVF). The Cytoplasmic portion of the chain corresponds to 150-189 (NNVIARFRRTSWSLVEASMDLGANGWQTFRYVVLPNLSSA). A helical transmembrane segment spans residues 190–210 (LLAGGMLAFALSFDEIIVTTF). The Periplasmic portion of the chain corresponds to 211–236 (TAGHERTLPLWLLNQLGRPRDVPVTN). The chain crosses the membrane as a helical span at residues 237 to 257 (VVALLVMLVTTLPILGAWWLT). The Cytoplasmic segment spans residues 258 to 264 (REGDNGQ).

Belongs to the binding-protein-dependent transport system permease family. CysTW subfamily.

The protein resides in the cell inner membrane. Its function is as follows. Probably part of the ABC transporter complex YdcSTUV. Probably responsible for the translocation of the substrate across the membrane. The polypeptide is Inner membrane ABC transporter permease protein YdcV (ydcV) (Shigella flexneri).